We begin with the raw amino-acid sequence, 902 residues long: MLSPQRALLCNLNHIHLQHVSLGLHLSRRPELQEGPLSTPPPPGDTGGKESRGPCSGTLVDANSNSPAVPCRCCQEHGPGLENRQDPSQEEEGAASPSDPGCSSSLSSCSDLSPDESPVSVYLRDLPGDEDAHPQPSIIPLEQGSPLASAGPGTCSPDSFCCSPDSCSGASSSPDPGLDSNCNALTTCQDVPSPGLEEEDERAEQDLPTSELLEADDGKIDAGKTEPSWKINPIWKIDTEKTKAEWKTTENNNTGWKNNGNVNSSWKSEPEKFDSGWKTNTRITDSGSKTDAGKIDGGWRSDVSEEPVPHRTITSFHELAQKRKRGPGLPLVPQAKKDRSDWLIVFSPDTELPPSGSPGGSSAPPREVTTFKELRSRSRAPAPPVPPRDPPVGWALVPPRPPPPPVPPRRKKNRPGLQPIAEGQSEEGRAVSPAAGEEAPAAKEPGAQAGLEVRSSWSFAGVPGAQRLWMAEAQSGTGQLQEQKKGLLIAVSVSVDKIISHFGAARNLVQKAQLGDSRLSPDVGHLVLTTLCPALHALVADGLKPFRKDLITGQRRSSPWSVVEASVKPGSSTRSLGTLYSQVSRLAPLSSSRSRFHAFILGLLNTKQLELWFSSLQEDAGLLSLLYLPTGFFSLARGGCPSLSTELLLLLQPLSVLTFHLDLLFEHHHHLPLGPPQAPAPPGPPPALQQTMQAMLHFGGRLAQSLRGTSKEAASDPSDSPNLPTPGSWWEQLTQASRVYASGGTEGFPLSRWAPGRHGTAAEEGAQERPLPTDEMAPGRGLWLGRLFGVPGGPAENENGALKSRRPSSWLPPTVSVLALVKRGAPPEMPSPQELEASAPRMVQTHRAVRALCDHTAARPDQLSFRRGEVLRVITTVDEDWLRCGRDGMEGLVPVGYTSLVL.

Disordered stretches follow at residues 31-67 (ELQEGPLSTPPPPGDTGGKESRGPCSGTLVDANSNSP), 81-155 (LENR…PGTC), 189-227 (QDVPSPGLEEEDERAEQDLPTSELLEADDGKIDAGKTEP), and 247-450 (KTTE…AQAG). Over residues 94–112 (AASPSDPGCSSSLSSCSDL) the composition is skewed to low complexity. Residues 249-261 (TENNNTGWKNNGN) show a composition bias toward low complexity. The span at 277–289 (WKTNTRITDSGSK) shows a compositional bias: polar residues. Residues 291 to 309 (DAGKIDGGWRSDVSEEPVP) show a composition bias toward basic and acidic residues. Composition is skewed to pro residues over residues 381-390 (PAPPVPPRDP) and 398-407 (PPRPPPPPVP). Residues 433–450 (PAAGEEAPAAKEPGAQAG) are compositionally biased toward low complexity. The interval 470–605 (MAEAQSGTGQ…FHAFILGLLN (136 aa)) is interaction with TRAF6. Positions 522-666 (DVGHLVLTTL…LTFHLDLLFE (145 aa)) constitute an RUN domain. Residues 606 to 672 (TKQLELWFSS…LLFEHHHHLP (67 aa)) are interaction with IKBKG. Disordered regions lie at residues 706-729 (LRGTSKEAASDPSDSPNLPTPGSW) and 747-776 (GFPLSRWAPGRHGTAAEEGAQERPLPTDEM). One can recognise an SH3 domain in the interval 844–902 (QTHRAVRALCDHTAARPDQLSFRRGEVLRVITTVDEDWLRCGRDGMEGLVPVGYTSLVL).

As to quaternary structure, associated component of the adapter-like complex 4 (AP-4). Interacts with IKBKG and TRAF6. Interacts with F-actin, acetylated actin, TUBB3, STX1A, KIF5B and KLC1. Post-translationally, phosphorylated on serine residues following nuclear translocation. Polyubiquitinated; polyubiquitination involves TRAF6. As to expression, predominantly expressed in brain.

It is found in the cytoplasm. It localises to the nucleus. The protein localises to the cytoskeleton. Its subcellular location is the cytoplasmic vesicle. The protein resides in the early endosome. It is found in the postsynaptic density. It localises to the golgi apparatus. Its function is as follows. Associates with the adapter-like complex 4 (AP-4) and may therefore play a role in vesicular trafficking of proteins at the trans-Golgi network. Signaling adapter which plays a role in neuronal differentiation. Involved in regulation of NGF-dependent neurite outgrowth. May play a role in neuronal vesicular trafficking, specifically involving pre-synaptic membrane proteins. Seems to be involved in signaling pathways that are regulated by the prolonged activation of MAPK. Can regulate the polyubiquitination of IKBKG and thus may be involved in regulation of the NF-kappa-B pathway. The polypeptide is AP-4 complex accessory subunit RUSC1 (Homo sapiens (Human)).